A 447-amino-acid chain; its full sequence is Probable glycine dehydrogenase (decarboxylating) subunit 1 (447 aa).

It belongs to the GcvP family. N-terminal subunit subfamily. The glycine cleavage system is composed of four proteins: P, T, L and H. In this organism, the P 'protein' is a heterodimer of two subunits.

It catalyses the reaction N(6)-[(R)-lipoyl]-L-lysyl-[glycine-cleavage complex H protein] + glycine + H(+) = N(6)-[(R)-S(8)-aminomethyldihydrolipoyl]-L-lysyl-[glycine-cleavage complex H protein] + CO2. Functionally, the glycine cleavage system catalyzes the degradation of glycine. The P protein binds the alpha-amino group of glycine through its pyridoxal phosphate cofactor; CO(2) is released and the remaining methylamine moiety is then transferred to the lipoamide cofactor of the H protein. This is Probable glycine dehydrogenase (decarboxylating) subunit 1 from Bacillus cereus (strain ATCC 10987 / NRS 248).